We begin with the raw amino-acid sequence, 384 residues long: MDEQDILNELREYRNQDLKYEEGYILGSMCTKPHPMARKISEMFFETNLGDPGLFKGTSKLEKEVVSMIGGILHNKNAFGYLISGGTEANLTAMRAFKNISKSKGKPQNIIIPETAHFSFDKAKDMMDLNVVRPPLTKYFTMDVKFIKDYIEDSKNEVSGIVGIAGCTELGSIDNICELSKIAVENDILLHVDAAFGGFVIPFLDDKYKLDGYNYDFDFSLNGVSSITIDPHKMGLAPISAGGILFRDNMFKKYLDVDAPYLTEKQQATIIGTRSGVGVASTWGIMKLLGIDGYETLVNESMEKTMYLVKKAREYGFETAIDPVMNIVALNDENKHDTCMKLRDENWYVSVCRCVDALRIVVMPHLEIEHIDGFLESLSNTKKY.

N6-(pyridoxal phosphate)lysine is present on Lys233.

This sequence belongs to the group II decarboxylase family. MfnA subfamily. Pyridoxal 5'-phosphate is required as a cofactor.

The enzyme catalyses L-tyrosine + H(+) = tyramine + CO2. It carries out the reaction L-aspartate + H(+) = beta-alanine + CO2. The protein operates within cofactor biosynthesis; methanofuran biosynthesis. Its pathway is cofactor biosynthesis; coenzyme A biosynthesis. Its function is as follows. Catalyzes the decarboxylation of L-tyrosine to produce tyramine for methanofuran biosynthesis. Can also catalyze the decarboxylation of L-aspartate to produce beta-alanine for coenzyme A (CoA) biosynthesis. This chain is Probable L-tyrosine/L-aspartate decarboxylase, found in Methanococcus maripaludis (strain DSM 14266 / JCM 13030 / NBRC 101832 / S2 / LL).